A 305-amino-acid chain; its full sequence is UDP-3-O-acyl-N-acetylglucosamine deacetylase (305 aa).

His78, His237, and Asp241 together coordinate Zn(2+). The Proton donor role is filled by His264.

It belongs to the LpxC family. The cofactor is Zn(2+).

It catalyses the reaction a UDP-3-O-[(3R)-3-hydroxyacyl]-N-acetyl-alpha-D-glucosamine + H2O = a UDP-3-O-[(3R)-3-hydroxyacyl]-alpha-D-glucosamine + acetate. It functions in the pathway glycolipid biosynthesis; lipid IV(A) biosynthesis; lipid IV(A) from (3R)-3-hydroxytetradecanoyl-[acyl-carrier-protein] and UDP-N-acetyl-alpha-D-glucosamine: step 2/6. Its function is as follows. Catalyzes the hydrolysis of UDP-3-O-myristoyl-N-acetylglucosamine to form UDP-3-O-myristoylglucosamine and acetate, the committed step in lipid A biosynthesis. In Cupriavidus metallidurans (strain ATCC 43123 / DSM 2839 / NBRC 102507 / CH34) (Ralstonia metallidurans), this protein is UDP-3-O-acyl-N-acetylglucosamine deacetylase.